A 196-amino-acid chain; its full sequence is Cyclin-dependent kinase inhibitor 6 (196 aa).

2 disordered regions span residues 1-36 and 55-151; these read MSER…PDSH and ASDE…RKTP. A compositionally biased stretch (low complexity) spans 124–139; sequence SEGLGETTTEMESSSA. T152 bears the Phosphothreonine; by KIN10 mark.

Belongs to the CDI family. ICK/KRP subfamily. Specifically interacts with CDKA-1, but not with CDKB1-1. Interacts with CYCD1-1, CYCD4-1 and RHF1A. Binds to FBL17. Interacts with KIN10. Interacts with CYCD3-1. Ubiquitinated by RHF1A and SCF(FBL17). Ubiquitination leads to its subsequent degradation, thus controlling cell cycle progression. In terms of processing, the phosphorylation at Thr-152 by KIN10 represses its activity. In terms of tissue distribution, expressed in newly formed organs such as the shoot apex. Expressed in cotyledon, primary root and marginal region of the leaves as well as in developing pollen.

It is found in the nucleus. The protein localises to the nucleoplasm. Its activity is regulated as follows. Down-regulated by KIN10 under a phosphorylation-dependent manner. In terms of biological role, binds and inhibits CYCD2-1/CDKA-1 complex kinase activity. Regulates cell division which is crucial for plant growth, development and morphogenesis. May inhibit CDK kinases specifically involved in the G1/S phase transition. The protein is Cyclin-dependent kinase inhibitor 6 (KRP6) of Arabidopsis thaliana (Mouse-ear cress).